The following is a 218-amino-acid chain: Alkylmercury lyase (218 aa).

This sequence belongs to the MerB family.

The enzyme catalyses an alkylmercury + H(+) = an alkane + Hg(2+). Functionally, cleaves the carbon-mercury bond of organomercurials such as phenylmercuric acetate. One product is Hg(2+), which is subsequently detoxified by the mercuric reductase. The protein is Alkylmercury lyase of Clostridium butyricum.